Reading from the N-terminus, the 387-residue chain is Succinyl-diaminopimelate desuccinylase (387 aa).

H73 contributes to the Zn(2+) binding site. D75 is an active-site residue. Residue D106 participates in Zn(2+) binding. E141 serves as the catalytic Proton acceptor. Residues E142, E170, and H359 each contribute to the Zn(2+) site.

It belongs to the peptidase M20A family. DapE subfamily. In terms of assembly, homodimer. Zn(2+) serves as cofactor. It depends on Co(2+) as a cofactor.

The enzyme catalyses N-succinyl-(2S,6S)-2,6-diaminopimelate + H2O = (2S,6S)-2,6-diaminopimelate + succinate. The protein operates within amino-acid biosynthesis; L-lysine biosynthesis via DAP pathway; LL-2,6-diaminopimelate from (S)-tetrahydrodipicolinate (succinylase route): step 3/3. Functionally, catalyzes the hydrolysis of N-succinyl-L,L-diaminopimelic acid (SDAP), forming succinate and LL-2,6-diaminopimelate (DAP), an intermediate involved in the bacterial biosynthesis of lysine and meso-diaminopimelic acid, an essential component of bacterial cell walls. The chain is Succinyl-diaminopimelate desuccinylase from Methylorubrum populi (strain ATCC BAA-705 / NCIMB 13946 / BJ001) (Methylobacterium populi).